Consider the following 894-residue polypeptide: Histone-lysine N-methyltransferase PRDM9 (894 aa).

Disordered stretches follow at residues M1–M23 and S143–K174. One can recognise a KRAB-related domain in the interval M23–D86. Positions S143–H164 are enriched in polar residues. Zn(2+) is bound by residues C205, C208, C216, and H219. Positions P244–G358 constitute an SET domain. S-adenosyl-L-methionine contacts are provided by residues A256–L258, Y291, and N320–C321. Substrate is bound at residue N288–L294. Y357 serves as a coordination point for substrate. K368 is subject to N6,N6,N6-trimethyllysine; alternate. K368 carries the N6-methyllysine; alternate modification. An N6-methyllysine mark is found at K372 and K374. The segment at H388–H411 adopts a C2H2-type 1 zinc-finger fold. Residues C390, C393, H406, and H411 each coordinate Zn(2+). Positions E408 to Q469 are disordered. Residues P444–K461 are compositionally biased toward basic and acidic residues. The segment at V524–H546 adopts a C2H2-type 2; degenerate zinc-finger fold. C2H2-type zinc fingers lie at residues Y552–H574, Y580–H602, Y608–H630, Y636–H658, Y664–H686, Y692–H714, Y720–H742, Y748–H770, Y776–H798, Y804–H826, Y832–H854, and Y860–H882. The Zn(2+) site is built by C722, C725, H738, H742, C750, C753, H766, H770, C778, C781, H794, H798, C806, C809, H822, and H826. Residues S730–L820 are DNA-binding.

This sequence belongs to the class V-like SAM-binding methyltransferase superfamily. As to quaternary structure, homodimer. Interacts with EHMT2 and CDYL; interaction only takes place when PRDM9 is bound to hotspot DNA. Interacts with CXXC1; this interaction does not link PRDM9-activated recombination hotspot sites with DSB machinery and is not required for the hotspot recognition pathway. Forms a complex with EWSR1, REC8, SYCP3 and SYCP1; complex formation is dependent of phosphorylated form of REC8 and requires PRDM9 bound to hotspot DNA; EWSR1 joins PRDM9 with the chromosomal axis through REC8. In terms of processing, mono-methylated; automethylated. Tri-methylated; automethylated. Mono-methylation is predominant; automethylation is lower and slower than H3 peptide methylation and is in a highest S-adenosyl-L-methionine concentration-dependent. There are two major sites for automethylation at Lys-368 and Lys-374. Lysines can be simultaneously methylated, such as Lys-368(me3)/Lys-372(me1), Lys-368(me1)/Lys-374(me1) and Lys-368(me1)/Lys-372(me1)/Lys-374(me1). Automethylation is an intramolecular (cis) process.

The protein resides in the nucleus. It is found in the chromosome. The enzyme catalyses L-lysyl-[protein] + S-adenosyl-L-methionine = N(6)-methyl-L-lysyl-[protein] + S-adenosyl-L-homocysteine + H(+). It carries out the reaction N(6)-methyl-L-lysyl-[protein] + S-adenosyl-L-methionine = N(6),N(6)-dimethyl-L-lysyl-[protein] + S-adenosyl-L-homocysteine + H(+). The catalysed reaction is L-lysyl(4)-[histone H3] + 3 S-adenosyl-L-methionine = N(6),N(6),N(6)-trimethyl-L-lysyl(4)-[histone H3] + 3 S-adenosyl-L-homocysteine + 3 H(+). It catalyses the reaction L-lysyl(36)-[histone H3] + 3 S-adenosyl-L-methionine = N(6),N(6),N(6)-trimethyl-L-lysyl(36)-[histone H3] + 3 S-adenosyl-L-homocysteine + 3 H(+). The enzyme catalyses L-lysyl(9)-[histone H3] + 3 S-adenosyl-L-methionine = N(6),N(6),N(6)-trimethyl-L-lysyl(9)-[histone H3] + 3 S-adenosyl-L-homocysteine + 3 H(+). It carries out the reaction L-lysyl(20)-[histone H4] + S-adenosyl-L-methionine = N(6)-methyl-L-lysyl(20)-[histone H4] + S-adenosyl-L-homocysteine + H(+). The catalysed reaction is N(6)-methyl-L-lysyl(20)-[histone H4] + S-adenosyl-L-methionine = N(6),N(6)-dimethyl-L-lysyl(20)-[histone H4] + S-adenosyl-L-homocysteine + H(+). Its activity is regulated as follows. Inhibited by suramin with an IC(50) of 4.1 uM. Histone methyltransferase that sequentially mono-, di-, and tri-methylates both 'Lys-4' (H3K4) and 'Lys-36' (H3K36) of histone H3 to produce respectively trimethylated 'Lys-4' (H3K4me3) and trimethylated 'Lys-36' (H3K36me3) histone H3 and plays a key role in meiotic prophase by determining hotspot localization thereby promoting meiotic recombination. Can also methylate all four core histones with H3 being the best substrate and the most highly modified. Is also able, on one hand, to mono and di-methylate H4K20 and on other hand to trimethylate H3K9 with the di-methylated H3K9 as the best substrate. During meiotic prophase, binds specific DNA sequences through its zinc finger domains thereby determining hotspot localization where it promotes local H3K4me3 and H3K36me3 enrichment on the same nucleosomes through its histone methyltransferase activity. Thereby promotes double-stranded breaks (DSB) formation, at this subset of PRDM9-binding sites, that initiates meiotic recombination for the proper meiotic progression. During meiotic progression hotspot-bound PRDM9 interacts with several complexes; in early leptonema binds CDYL and EHMT2 followed by EWSR1 and CXXC1 by the end of leptonema. EWSR1 joins PRDM9 with the chromosomal axis through REC8. In this way, controls the DSB repair pathway, pairing of homologous chromosomes and sex body formation. Moreover plays a central role in the transcriptional activation of genes during early meiotic prophase thanks to H3K4me3 and H3K36me3 enrichment that represents a specific tag for epigenetic transcriptional activation. In addition performs automethylation. Acetylation and phosphorylation of histone H3 attenuate or prevent histone H3 methylation. This Homo sapiens (Human) protein is Histone-lysine N-methyltransferase PRDM9.